Here is a 116-residue protein sequence, read N- to C-terminus: UPF0482 protein ECA2253 (116 aa).

An N-terminal signal peptide occupies residues 1–31 (MNHYSFSSLIRALIPLSLVIVSAVWQPAALA).

This sequence belongs to the UPF0482 family.

The polypeptide is UPF0482 protein ECA2253 (Pectobacterium atrosepticum (strain SCRI 1043 / ATCC BAA-672) (Erwinia carotovora subsp. atroseptica)).